A 146-amino-acid chain; its full sequence is Interleukin-13 (146 aa).

An N-terminal signal peptide occupies residues 1–24 (MHPLLNPLLLALGLMALLLTTVIA). Residues Asn-52, Asn-63, Asn-71, and Asn-86 are each glycosylated (N-linked (GlcNAc...) asparagine). Intrachain disulfides connect Cys-62–Cys-90 and Cys-78–Cys-104.

It belongs to the IL-4/IL-13 family. In terms of assembly, interacts with IL13RA2.

The protein resides in the secreted. Its function is as follows. Cytokine that plays important roles in allergic inflammation and immune response to parasite infection. Synergizes with IL2 in regulating interferon-gamma synthesis. Stimulates B-cell proliferation, and activation of eosinophils, basophils, and mast cells. Plays an important role in controlling IL33 activity by modulating the production of transmembrane and soluble forms of interleukin-1 receptor-like 1/IL1RL1. Displays the capacity to antagonize Th1-driven proinflammatory immune response and downregulates synthesis of many proinflammatory cytokines including IL1, IL6, IL10, IL12 and TNF-alpha through a mechanism that partially involves suppression of NF-kappa-B. Also functions on nonhematopoietic cells, including endothelial cells where it induces vascular cell adhesion protein 1/VCAM1, which is important in the recruitment of eosinophils. Exerts its biological effects through its receptors which comprises the IL4R chain and the IL13RA1 chain, to activate JAK1 and TYK2, leading to the activation of STAT6. Aside from IL13RA1, another receptor IL13RA2 acts as a high affinity decoy for IL13 and mediates internalization and depletion of extracellular IL13. The protein is Interleukin-13 (IL13) of Homo sapiens (Human).